Here is an 803-residue protein sequence, read N- to C-terminus: DNA polymerase 2 (803 aa).

Belongs to the DNA polymerase type-B family.

The catalysed reaction is DNA(n) + a 2'-deoxyribonucleoside 5'-triphosphate = DNA(n+1) + diphosphate. This chain is DNA polymerase 2 (polB), found in Aeropyrum pernix (strain ATCC 700893 / DSM 11879 / JCM 9820 / NBRC 100138 / K1).